The chain runs to 220 residues: uncharacterized protein (220 aa).

A run of 4 helical transmembrane segments spans residues 9 to 29 (LWIT…GSTQ), 54 to 74 (YAVH…FLAV), 105 to 125 (VQGI…IHLW), and 177 to 197 (VLAV…VIEM).

It localises to the cell membrane. This is an uncharacterized protein from Sinorhizobium fredii (strain NBRC 101917 / NGR234).